The following is a 121-amino-acid chain: Large ribosomal subunit protein uL18 (121 aa).

This sequence belongs to the universal ribosomal protein uL18 family. As to quaternary structure, part of the 50S ribosomal subunit; part of the 5S rRNA/L5/L18/L25 subcomplex. Contacts the 5S and 23S rRNAs.

Its function is as follows. This is one of the proteins that bind and probably mediate the attachment of the 5S RNA into the large ribosomal subunit, where it forms part of the central protuberance. This Polaromonas naphthalenivorans (strain CJ2) protein is Large ribosomal subunit protein uL18.